Here is a 110-residue protein sequence, read N- to C-terminus: UPF0060 membrane protein Mfla_2554 (110 aa).

The next 4 helical transmembrane spans lie at 7–27 (VALF…PYLW), 33–53 (SPLL…LLTL), 61–81 (VYAA…WVVD), and 83–103 (IIPS…MAII).

This sequence belongs to the UPF0060 family.

Its subcellular location is the cell inner membrane. The protein is UPF0060 membrane protein Mfla_2554 of Methylobacillus flagellatus (strain ATCC 51484 / DSM 6875 / VKM B-1610 / KT).